Reading from the N-terminus, the 87-residue chain is Large ribosomal subunit protein bL27 (87 aa).

The segment at 1 to 21 (MAHKKAGGSSRNGRDSESKRL) is disordered.

Belongs to the bacterial ribosomal protein bL27 family.

This chain is Large ribosomal subunit protein bL27, found in Burkholderia multivorans (strain ATCC 17616 / 249).